Here is a 171-residue protein sequence, read N- to C-terminus: Myelin basic protein (171 aa).

Position 1 is an N-acetylalanine (A1). 2 positions are modified to phosphoserine: S7 and S12. A Phosphotyrosine modification is found at Y14. Position 17 is a phosphothreonine (T17). Phosphoserine is present on S19. Phosphothreonine is present on T20. Citrulline occurs at positions 25 and 31. Position 35 is a phosphothreonine (T35). S40 carries the post-translational modification Phosphoserine. Residues R43 and R49 each carry the omega-N-methylarginine modification. The disordered stretch occupies residues 44-115 (FFGGDRGAPK…GRGLSLSRFS (72 aa)). At S56 the chain carries Phosphoserine. Residue Y69 is modified to Phosphotyrosine. At S76 the chain carries Phosphoserine. Residues T80, T95, and T98 each carry the phosphothreonine modification. Q103 carries the deamidated glutamine modification. At R107 the chain carries Omega-N-methylarginine; alternate. R107 bears the Symmetric dimethylarginine; alternate mark. The residue at position 115 (S115) is a Phosphoserine. Citrulline is present on residues R122 and R130. Q148 carries the post-translational modification Deamidated glutamine. R160 is subject to Citrulline. At S162 the chain carries Phosphoserine. The residue at position 166 (S166) is a Phosphoserine; by UHMK1. R171 bears the Citrulline mark.

The protein belongs to the myelin basic protein family. In terms of assembly, homodimer. In terms of processing, as in other animals, several charge isomers may be produced as a result of optional post-translational modifications, such as phosphorylation of serine or threonine residues, deamidation of glutamine or asparagine residues, citrullination and methylation of arginine residues. Phosphorylated by TAOK2, VRK2, MAPK11, MAPK12, MAPK14 and MINK1. Post-translationally, proteolytically cleaved in B cell lysosomes by cathepsin CTSG which degrades the major immunogenic MBP epitope and prevents the activation of MBP-specific autoreactive T cells.

It localises to the myelin membrane. In terms of biological role, is, with PLP, the most abundant protein component of the myelin membrane in the CNS. Has a role in both the formation and stabilization of this compact multilayer arrangement of bilayers. Each splice variant and charge isomer may have a specialized function in the assembly of an optimized, biochemically functional myelin membrane. The chain is Myelin basic protein (MBP) from Pan troglodytes (Chimpanzee).